The primary structure comprises 302 residues: MPGLWRQRLPSAWALLLLPFLPLLLPAAPAPHRGSYKPVIVVHGLFDSSYSFRHLLDYINETHPGTVVTVLDLFDGRESLRPLWEQVQGFREAVVPIMEKAPEGVHLICYSQGGLVCRALLSVMDEHNVDSFISLSSPQMGQYGDTDYLKWLFPTSMRSNLYRICYSPWGQEFSICNYWHDPHHDDLYLNASSFLALINGERDHPNATAWRKNFLRVGRLVLIGGPDDGVITPWQSSFFGFYDANETVLEMEEQPVYLRDSFGLKTLLARGAIVRCPMAGVSHTTWHSNRTLYDACIEPWLS.

Residues 1 to 27 form the signal peptide; sequence MPGLWRQRLPSAWALLLLPFLPLLLPA. Asn-60 carries an N-linked (GlcNAc...) asparagine glycan. 2 disulfides stabilise this stretch: Cys-109/Cys-117 and Cys-165/Cys-176. Ser-111 acts as the Nucleophile in catalysis. 2 N-linked (GlcNAc...) asparagine glycosylation sites follow: Asn-190 and Asn-206. Asp-228 is an active-site residue. Asn-245 is a glycosylation site (N-linked (GlcNAc...) asparagine). Cys-276 and Cys-296 are joined by a disulfide. The active site involves His-283. Residue Asn-289 is glycosylated (N-linked (GlcNAc...) asparagine).

Belongs to the palmitoyl-protein thioesterase family.

The protein localises to the lysosome. The enzyme catalyses hexadecanoyl-CoA + H2O = hexadecanoate + CoA + H(+). The catalysed reaction is S-hexadecanoyl-N-acetylcysteamine + H2O = N-acetylcysteamine + hexadecanoate + H(+). Functionally, catalyzes the cleavage of thioester bonds from S-palmitoyl-CoA or S-palmitoyl-N-acetylcysteamine (unbranched structures) but does not have activity against palmitoylcysteine or palmitoylated proteins, branched structures or bulky head groups. Conversely, hydrolyzes both long and short chain fatty acyl-CoA substrate. The polypeptide is Lysosomal thioesterase PPT2 (Ppt2) (Rattus norvegicus (Rat)).